Here is a 380-residue protein sequence, read N- to C-terminus: Cytochrome b (380 aa).

Transmembrane regions (helical) follow at residues 34 to 54, 78 to 99, 114 to 134, and 179 to 199; these read FGSL…LLAM, WLIR…YLHI, WNTG…GYVL, and FFAL…IHLT. 2 residues coordinate heme b: H84 and H98. Heme b is bound by residues H183 and H197. H202 provides a ligand contact to a ubiquinone. 4 consecutive transmembrane segments (helical) span residues 227 to 247, 289 to 309, 321 to 341, and 348 to 368; these read LKDI…ALFS, LGGV…PLLH, LSQL…WIGS, and FIII…ILFP.

The protein belongs to the cytochrome b family. In terms of assembly, the cytochrome bc1 complex contains 11 subunits: 3 respiratory subunits (MT-CYB, CYC1 and UQCRFS1), 2 core proteins (UQCRC1 and UQCRC2) and 6 low-molecular weight proteins (UQCRH/QCR6, UQCRB/QCR7, UQCRQ/QCR8, UQCR10/QCR9, UQCR11/QCR10 and a cleavage product of UQCRFS1). This cytochrome bc1 complex then forms a dimer. Heme b serves as cofactor.

The protein resides in the mitochondrion inner membrane. In terms of biological role, component of the ubiquinol-cytochrome c reductase complex (complex III or cytochrome b-c1 complex) that is part of the mitochondrial respiratory chain. The b-c1 complex mediates electron transfer from ubiquinol to cytochrome c. Contributes to the generation of a proton gradient across the mitochondrial membrane that is then used for ATP synthesis. This chain is Cytochrome b (MT-CYB), found in Oceanodroma microsoma (Least storm petrel).